The sequence spans 449 residues: Gamma-aminobutyric acid receptor subunit delta (449 aa).

A signal peptide spans 1 to 24; it reads MDVLGWLLLPLLLLCTQPHHGARA. Residues 25–251 are Extracellular-facing; it reads MNDIGDYVGS…QLRRNRGVYI (227 aa). 2 N-linked (GlcNAc...) asparagine glycosylation sites follow: Asn-103 and Asn-106. Residues Cys-164 and Cys-178 are joined by a disulfide bond. A helical transmembrane segment spans residues 252-271; sequence IQSYMPSVLLVAMSWVSFWI. At 272 to 275 the chain is on the cytoplasmic side; the sequence is SQAA. The helical transmembrane segment at 276-298 threads the bilayer; the sequence is VPARVSLGITTVLTMTTLMVSAR. At 299–308 the chain is on the extracellular side; that stretch reads SSLPRASAIK. The chain crosses the membrane as a helical span at residues 309–331; the sequence is ALDVYFWICYVFVFAALVEYAFA. Over 332–423 the chain is Cytoplasmic; the sequence is HFNADYRKKR…SRLKPIDADT (92 aa). A Phosphoserine modification is found at Ser-390. A helical membrane pass occupies residues 424-446; that stretch reads IDIYARAVFPAAFAAVNIIYWAA. Topologically, residues 447 to 449 are extracellular; the sequence is YTM.

Belongs to the ligand-gated ion channel (TC 1.A.9) family. Gamma-aminobutyric acid receptor (TC 1.A.9.5) subfamily. GABRD sub-subfamily. In terms of assembly, heteropentamer, formed by a combination of alpha (GABRA1-6), beta (GABRB1-3), gamma (GABRG1-3), delta (GABRD), epsilon (GABRE), rho (GABRR1-3), pi (GABRP) and theta (GABRQ) chains, each subunit exhibiting distinct physiological and pharmacological properties.

It is found in the cell membrane. The catalysed reaction is chloride(in) = chloride(out). In terms of biological role, delta subunit of the heteropentameric ligand-gated chloride channel gated by gamma-aminobutyric acid (GABA), a major inhibitory neurotransmitter in the brain. GABA-gated chloride channels, also named GABA(A) receptors (GABAAR), consist of five subunits arranged around a central pore and contain GABA active binding site(s) located at the alpha and beta subunit interface(s). When activated by GABA, GABAARs selectively allow the flow of chloride anions across the cell membrane down their electrochemical gradient. GABAARs containing delta/GABRD subunits are predominantly expressed and located in extrasynaptic or perisynaptic positions on hippocampus and cerebellar granule cells, and contribute to the tonic GABAergic inhibition. GABAAR containing alpha-4-beta-3-delta subunits can simultaneously bind GABA and histamine where histamine binds at the interface of two neighboring beta subunits, which may be involved in the regulation of sleep and wakefulness. This is Gamma-aminobutyric acid receptor subunit delta from Mus musculus (Mouse).